Here is a 121-residue protein sequence, read N- to C-terminus: Small ribosomal subunit protein uS13 (121 aa).

A disordered region spans residues 92-121 (RRGLPVRGQNSKNNARTRKGPKRTVANKKK). Residues 106 to 121 (ARTRKGPKRTVANKKK) show a composition bias toward basic residues.

This sequence belongs to the universal ribosomal protein uS13 family. Part of the 30S ribosomal subunit. Forms a loose heterodimer with protein S19. Forms two bridges to the 50S subunit in the 70S ribosome.

Functionally, located at the top of the head of the 30S subunit, it contacts several helices of the 16S rRNA. In the 70S ribosome it contacts the 23S rRNA (bridge B1a) and protein L5 of the 50S subunit (bridge B1b), connecting the 2 subunits; these bridges are implicated in subunit movement. Contacts the tRNAs in the A and P-sites. In Shouchella clausii (strain KSM-K16) (Alkalihalobacillus clausii), this protein is Small ribosomal subunit protein uS13.